A 340-amino-acid chain; its full sequence is tRNA N6-adenosine threonylcarbamoyltransferase (340 aa).

Residues His-109 and His-113 each contribute to the Fe cation site. Residues 132-136, Asp-165, Gly-178, and Asn-277 each bind substrate; that span reads AISGA. Asp-302 contributes to the Fe cation binding site.

The protein belongs to the KAE1 / TsaD family. The cofactor is Fe(2+).

The protein localises to the cytoplasm. The catalysed reaction is L-threonylcarbamoyladenylate + adenosine(37) in tRNA = N(6)-L-threonylcarbamoyladenosine(37) in tRNA + AMP + H(+). In terms of biological role, required for the formation of a threonylcarbamoyl group on adenosine at position 37 (t(6)A37) in tRNAs that read codons beginning with adenine. Is involved in the transfer of the threonylcarbamoyl moiety of threonylcarbamoyl-AMP (TC-AMP) to the N6 group of A37, together with TsaE and TsaB. TsaD likely plays a direct catalytic role in this reaction. The sequence is that of tRNA N6-adenosine threonylcarbamoyltransferase from Chlamydia muridarum (strain MoPn / Nigg).